Consider the following 463-residue polypeptide: tRNA-2-methylthio-N(6)-dimethylallyladenosine synthase (463 aa).

An MTTase N-terminal domain is found at 19 to 135 (GSYWITTFGC…LESLLNQVDS (117 aa)). Positions 28, 64, 98, 170, 174, and 177 each coordinate [4Fe-4S] cluster. One can recognise a Radical SAM core domain in the interval 156–393 (RDSSFCGWVN…NSLVENIAKE (238 aa)). In terms of domain architecture, TRAM spans 396 to 463 (QRYKNTSQEI…RPFSLTAKLL (68 aa)).

Belongs to the methylthiotransferase family. MiaB subfamily. In terms of assembly, monomer. It depends on [4Fe-4S] cluster as a cofactor.

It is found in the cytoplasm. The catalysed reaction is N(6)-dimethylallyladenosine(37) in tRNA + (sulfur carrier)-SH + AH2 + 2 S-adenosyl-L-methionine = 2-methylsulfanyl-N(6)-dimethylallyladenosine(37) in tRNA + (sulfur carrier)-H + 5'-deoxyadenosine + L-methionine + A + S-adenosyl-L-homocysteine + 2 H(+). Catalyzes the methylthiolation of N6-(dimethylallyl)adenosine (i(6)A), leading to the formation of 2-methylthio-N6-(dimethylallyl)adenosine (ms(2)i(6)A) at position 37 in tRNAs that read codons beginning with uridine. The chain is tRNA-2-methylthio-N(6)-dimethylallyladenosine synthase from Prochlorococcus marinus (strain NATL1A).